The following is a 502-amino-acid chain: Glycerol kinase (502 aa).

Position 13 (Thr-13) interacts with ADP. 3 residues coordinate ATP: Thr-13, Thr-14, and Ser-15. Thr-13 provides a ligand contact to sn-glycerol 3-phosphate. Position 17 (Arg-17) interacts with ADP. Residues Arg-83, Glu-84, Tyr-136, and Asp-246 each coordinate sn-glycerol 3-phosphate. 5 residues coordinate glycerol: Arg-83, Glu-84, Tyr-136, Asp-246, and Gln-247. ADP-binding residues include Thr-268 and Gly-311. The ATP site is built by Thr-268, Gly-311, Gln-315, and Gly-412. ADP-binding residues include Gly-412 and Asn-416.

This sequence belongs to the FGGY kinase family.

The enzyme catalyses glycerol + ATP = sn-glycerol 3-phosphate + ADP + H(+). Its pathway is polyol metabolism; glycerol degradation via glycerol kinase pathway; sn-glycerol 3-phosphate from glycerol: step 1/1. Inhibited by fructose 1,6-bisphosphate (FBP). Key enzyme in the regulation of glycerol uptake and metabolism. Catalyzes the phosphorylation of glycerol to yield sn-glycerol 3-phosphate. The polypeptide is Glycerol kinase (Francisella tularensis subsp. holarctica (strain FTNF002-00 / FTA)).